The chain runs to 107 residues: Diuretic hormone 45 (107 aa).

Positions 1–44 (LYAMSPMAARYSAGAPWLYLLADMPRDSQRLVDPADLHEGRARP) are excised as a propeptide. Position 91 is a valine amide (Val-91).

Expressed in corpora cardiaca (CC), corpora allata (CA), antennal lobe (AL) and gnathal ganglion (GNG) (at protein level). Expression in AL and GNG detected in some animals, in CC and CA in few animals (at protein level).

It localises to the secreted. Its function is as follows. Regulation of fluid secretion. The protein is Diuretic hormone 45 of Agrotis ipsilon (Black cutworm moth).